The chain runs to 376 residues: Thymidine kinase (376 aa).

Positions 1–44 are disordered; it reads MASYPGHQHASAFDQAARSRGHSNRRTALRPRRQQEATEVRPEQ. Residues 19–32 show a composition bias toward basic residues; that stretch reads SRGHSNRRTALRPR. Basic and acidic residues predominate over residues 33–44; it reads RQQEATEVRPEQ. 56 to 63 lines the ATP pocket; it reads GPHGMGKT. Glutamate 83 (proton acceptor) is an active-site residue. Residues tyrosine 101 and glutamine 125 each contribute to the substrate site. An ATP-binding site is contributed by arginine 216. Arginine 222 contacts substrate. Positions 260 to 280 are disordered; that stretch reads GQLSGTAVPPQGAEPQSNAGP.

This sequence belongs to the herpesviridae thymidine kinase family. Homodimer.

It carries out the reaction thymidine + ATP = dTMP + ADP + H(+). Its function is as follows. Catalyzes the transfer of the gamma-phospho group of ATP to thymidine to generate dTMP in the salvage pathway of pyrimidine synthesis. The dTMP serves as a substrate for DNA polymerase during viral DNA replication. Allows the virus to be reactivated and to grow in non-proliferative cells lacking a high concentration of phosphorylated nucleic acid precursors. In Human herpesvirus 1 (strain SC16) (HHV-1), this protein is Thymidine kinase.